A 227-amino-acid chain; its full sequence is Enolase-phosphatase E1 (227 aa).

Residues Asp-11 and Glu-13 each coordinate Mg(2+). Substrate is bound by residues 118–119 (SS) and Lys-161. Position 186 (Asp-186) interacts with Mg(2+).

It belongs to the HAD-like hydrolase superfamily. MasA/MtnC family. Monomer. Mg(2+) serves as cofactor.

It is found in the cytoplasm. The protein localises to the nucleus. The catalysed reaction is 5-methylsulfanyl-2,3-dioxopentyl phosphate + H2O = 1,2-dihydroxy-5-(methylsulfanyl)pent-1-en-3-one + phosphate. The protein operates within amino-acid biosynthesis; L-methionine biosynthesis via salvage pathway; L-methionine from S-methyl-5-thio-alpha-D-ribose 1-phosphate: step 3/6. It functions in the pathway amino-acid biosynthesis; L-methionine biosynthesis via salvage pathway; L-methionine from S-methyl-5-thio-alpha-D-ribose 1-phosphate: step 4/6. In terms of biological role, bifunctional enzyme that catalyzes the enolization of 2,3-diketo-5-methylthiopentyl-1-phosphate (DK-MTP-1-P) into the intermediate 2-hydroxy-3-keto-5-methylthiopentenyl-1-phosphate (HK-MTPenyl-1-P), which is then dephosphorylated to form the acireductone 1,2-dihydroxy-3-keto-5-methylthiopentene (DHK-MTPene). In Saccharomyces cerevisiae (strain YJM789) (Baker's yeast), this protein is Enolase-phosphatase E1.